The following is a 116-amino-acid chain: NADH-ubiquinone oxidoreductase chain 3 (116 aa).

Helical transmembrane passes span 6–26 (FMLL…FWLA), 56–76 (FFLV…LLPL), and 85–105 (PLLT…GLVY).

The protein belongs to the complex I subunit 3 family.

The protein resides in the mitochondrion membrane. It catalyses the reaction a ubiquinone + NADH + 5 H(+)(in) = a ubiquinol + NAD(+) + 4 H(+)(out). Its function is as follows. Core subunit of the mitochondrial membrane respiratory chain NADH dehydrogenase (Complex I) that is believed to belong to the minimal assembly required for catalysis. Complex I functions in the transfer of electrons from NADH to the respiratory chain. The immediate electron acceptor for the enzyme is believed to be ubiquinone. The sequence is that of NADH-ubiquinone oxidoreductase chain 3 (MT-ND3) from Struthio camelus (Common ostrich).